Consider the following 175-residue polypeptide: NADH dehydrogenase [ubiquinone] iron-sulfur protein 4, mitochondrial (175 aa).

A mitochondrion-targeting transit peptide spans 1–42; the sequence is MAAVSMSVALRQALWGRRVATVAAVSVSKVSTRSLSTSTWRL. The tract at residues 149–175 is disordered; the sequence is ERKVPKPKSKSYGANFSWNKRTRVSTK. S173 carries the phosphoserine modification.

The protein belongs to the complex I NDUFS4 subunit family. Mammalian complex I is composed of 45 different subunits. This is a component of the iron-sulfur (IP) fragment of the enzyme. Interacts with BCAP31 and TOMM40; the interaction mediates its translocation to the mitochondria; the interaction with BCAP31 is direct. Post-translationally, phosphorylated.

The protein resides in the mitochondrion inner membrane. Its function is as follows. Accessory subunit of the mitochondrial membrane respiratory chain NADH dehydrogenase (Complex I), that is believed not to be involved in catalysis. Complex I functions in the transfer of electrons from NADH to the respiratory chain. The immediate electron acceptor for the enzyme is believed to be ubiquinone. The sequence is that of NADH dehydrogenase [ubiquinone] iron-sulfur protein 4, mitochondrial (NDUFS4) from Bos taurus (Bovine).